The following is a 221-amino-acid chain: Type II secretion system protein J (221 aa).

Residues 1–15 constitute a propeptide, leader sequence; it reads MWRTNQVSSRQNMAG. The residue at position 16 (Phe16) is an N-methylphenylalanine. Residues 16–36 traverse the membrane as a helical segment; the sequence is FTLIEVLVAIAIFASLSVGAY.

The protein belongs to the GSP J family. In terms of assembly, type II secretion is composed of four main components: the outer membrane complex, the inner membrane complex, the cytoplasmic secretion ATPase and the periplasm-spanning pseudopilus. Interacts with core component epsG. Cleaved by prepilin peptidase. In terms of processing, methylated by prepilin peptidase at the amino group of the N-terminal phenylalanine once the leader sequence is cleaved by prepilin peptidase.

It localises to the cell inner membrane. In terms of biological role, component of the type II secretion system required for the energy-dependent secretion of extracellular factors such as proteases and toxins from the periplasm. Part of the pseudopilus tip complex that is critical for the recognition and binding of secretion substrates. The polypeptide is Type II secretion system protein J (epsJ) (Vibrio cholerae serotype O1 (strain ATCC 39315 / El Tor Inaba N16961)).